The primary structure comprises 180 residues: Cytokinin-beta-glucosidase 1 (180 aa).

Hydrolyzes cytokinin glucosides thus liberating free cytokinins. The chain is Cytokinin-beta-glucosidase 1 (ROLC1) from Panax ginseng (Korean ginseng).